A 188-amino-acid chain; its full sequence is UPF0398 protein SSP1297 (188 aa).

The protein belongs to the UPF0398 family.

In Staphylococcus saprophyticus subsp. saprophyticus (strain ATCC 15305 / DSM 20229 / NCIMB 8711 / NCTC 7292 / S-41), this protein is UPF0398 protein SSP1297.